A 113-amino-acid chain; its full sequence is uncharacterized protein (113 aa).

Disordered regions lie at residues 1-22 (MGEHAIKRHMRQRKPTKHPLAQ) and 90-113 (DGRHTTESSFEHSSPSRSPQSDDL). The span at 90 to 99 (DGRHTTESSF) shows a compositional bias: basic and acidic residues. Positions 100–113 (EHSSPSRSPQSDDL) are enriched in low complexity.

This is an uncharacterized protein from Mycobacterium tuberculosis (strain CDC 1551 / Oshkosh).